Reading from the N-terminus, the 1374-residue chain is MKVSDRRKFEKANFDEFESALNNKNDLVHCPSITLFESIPTEVRSFYEDEKSGLIKVVKFRTGAMDRKRSFEKIVVSVMVGKNVQKFLTFVEDEPDFQGGPIPSKYLIPKKINLMVYTLFQVHTLKFNRKDYDTLSLFYLNRGYYNELSFRVLERCHEIASARPNDSSTMRTFTDFVSGAPIVRSLQKSTIRRYGYNLAPHMFLLLHVDELSIFSAYQASLPGEKKVDTERLKRDLCPRKPIEIKYFSQICNDMMNKKDRLGDVLATAQRIRRRYNKNSSSEPRLKTLDGLTSERWIQWLGLESDYHCSFSSTRNAEDVVAGEAASSDHHQKISRVTRKRPREPKSTNDILVAGQKLFGSSFEFRDLHQLRLCHEIYMADTPSVAVQAPPGYGKTELFHLPLIALASKGDVKYVSFLFVPYTVLLANCMIRLSRCGCLNVAPVRNFIEEGCDGVTDLYVGIYDDLASTNFTDRIAAWENIVECTFRTNNVKLGYLIVDEFHNFETEVYRQSQFGGITNLDFDAFEKAIFLSGTAPEAVADAALQRIGLTGLAKKSMDINELKRSEDLSRGLSSYPTRMFNLIKEKSEVPLGHVHKIWKKVESQPEEALKLLLALFEIEPESKAIVVASTTNEVEELACSWRKYFRVVWIHGKLGAAEKVSRTKEFVTDGSMRVLIGTKLVTEGIDIKQLMMVIMLDNRLNIIELIQGVGRLRDGGLCYLLSRKNSWAARNRKGELPPIKEGCITEQVREFYGLESKKGKKGQHVGCCGSRTDLSADTVELIERMDRLAEKQATASMSIVALPSSFQESNSSDRCRKYCSSDEDSDTCIHGSANASTNATTNSSTNATTTASTNVRTSATTTASINVRTSATTTESTNSSTNATTTASTNVRTSATTTASINVRTSATTTESTNSNTSATTTESTDSNTSATTTESTDSNTSATTTASTNSSTNATTTASTNSSTNATTTESTNASAKEDANKDGNAEDNRFHPVTDINKESYKRKGSQMVLLERKKLKAQFPNTSENMNVLQFLGFRSDEIKHLFLYGIDIYFCPEGVFTQYGLCKGCQKMFELCVCWAGQKVSYRRMAWEALAVERMLRNDEEYKEYLEDIEPYHGDPVGYLKFFSVKRGEIYSQIQRNYAWYLAITRRRETISVLDSTRGKQGSQVFRMSGRQIKELYYKVWSNLRESKTEVLQYFLNWDEKKCREEWEAKDDTVFVEALEKVGVFQRLRSMTSAGLQGPQYVKLQFSRHHRQLRSRYELSLGMHLRDQLALGVTPSKVPHWTAFLSMLIGLFYNKTFRQKLEYLLEQISEVWLLPHWVDLANVEVLAADNTRVPLYMLMVAVHKELDSDDVPDGRFDIILLCRDSSREVGE.

Residues 375–552 (EIYMADTPSV…LQRIGLTGLA (178 aa)) enclose the Helicase ATP-binding domain. Residue 388–395 (APPGYGKT) participates in ATP binding. The 150-residue stretch at 609-758 (KLLLALFEIE…EFYGLESKKG (150 aa)) folds into the Helicase C-terminal domain. The segment covering 832–975 (ANASTNATTN…ATTTESTNAS (144 aa)) has biased composition (low complexity). A disordered region spans residues 832-999 (ANASTNATTN…RFHPVTDINK (168 aa)). The segment covering 976-999 (AKEDANKDGNAEDNRFHPVTDINK) has biased composition (basic and acidic residues).

It belongs to the helicase family. Yeast subtelomeric Y' repeat subfamily.

Functionally, catalyzes DNA unwinding and is involved in telomerase-independent telomere maintenance. In Saccharomyces cerevisiae (strain ATCC 204508 / S288c) (Baker's yeast), this protein is Y' element ATP-dependent helicase YML133C.